The primary structure comprises 269 residues: Hydroxyethylthiazole kinase (269 aa).

Methionine 48 serves as a coordination point for substrate. Lysine 124 and threonine 170 together coordinate ATP. Glycine 197 lines the substrate pocket.

The protein belongs to the Thz kinase family. The cofactor is Mg(2+).

The enzyme catalyses 5-(2-hydroxyethyl)-4-methylthiazole + ATP = 4-methyl-5-(2-phosphooxyethyl)-thiazole + ADP + H(+). It participates in cofactor biosynthesis; thiamine diphosphate biosynthesis; 4-methyl-5-(2-phosphoethyl)-thiazole from 5-(2-hydroxyethyl)-4-methylthiazole: step 1/1. Catalyzes the phosphorylation of the hydroxyl group of 4-methyl-5-beta-hydroxyethylthiazole (THZ). The chain is Hydroxyethylthiazole kinase from Clostridium kluyveri (strain NBRC 12016).